The sequence spans 847 residues: Zinc transporter ZIP10 (847 aa).

The signal sequence occupies residues 1-26 (MMRVHTHTRLCFLCVLTLLYHQCSHC). Residues 136–374 (GRHSHSAGHP…RREVPGSPAH (239 aa)) form a disordered region. The segment covering 162–171 (HHENEEHTLA) has biased composition (basic and acidic residues). The segment covering 179–188 (TLGTGATPPS) has biased composition (polar residues). Residues 190–269 (SEEHDHDHEH…QEHNDLSDQN (80 aa)) are compositionally biased toward basic and acidic residues. Basic residues-rich tracts occupy residues 270–285 (HHHH…HPHL) and 314–330 (TRRH…RGRN). N385 carries an N-linked (GlcNAc...) asparagine glycan. Helical transmembrane passes span 447–467 (FVSI…VPIL), 474–494 (FLLT…ALLH), and 529–549 (GLTA…IGMF). A disordered region spans residues 613 to 676 (ELQPLDSPSK…HSHHGHCHSD (64 aa)). A compositionally biased stretch (basic and acidic residues) spans 629-646 (DSDHPYEAPVKTEEDNVP). A compositionally biased stretch (basic residues) spans 648–672 (AKSKKHGHGHGHGHGHGHGHSHHGH). 4 helical membrane passes run 705-725 (AIGA…VAVF), 750-770 (IVYN…GTAV), 779-799 (SWIF…DMLP), and 817-837 (FVLQ…IAIF).

It belongs to the ZIP transporter (TC 2.A.5) family. Post-translationally, undergoes N-terminal ectodomain shedding.

It is found in the cell membrane. The protein resides in the apical cell membrane. It carries out the reaction Zn(2+)(in) = Zn(2+)(out). Functionally, zinc-influx transporter. When associated with slc39a6, the heterodimer slc39a10/slc39a6 has a functional role in epithelial-mesenchymal transition (EMT) during embryonic development. Slc39a10/slc39a6 heterodimers play also an essentiel role in initiating mitosis by importing zinc into cells to initiate a pathway resulting in the onset of mitosis. When associated with slc39a6, the heterodimer controls Ncam1 phosphorylation and integration into focal adhesion complexes during EMT. This Danio rerio (Zebrafish) protein is Zinc transporter ZIP10.